A 452-amino-acid polypeptide reads, in one-letter code: Exoglucanase 1 (452 aa).

A signal peptide spans M1–A18. N-linked (GlcNAc...) asparagine glycosylation is present at N75. E230 acts as the Nucleophile in catalysis. The active-site Proton donor is the E235. N335 and N360 each carry an N-linked (GlcNAc...) asparagine glycan.

It belongs to the glycosyl hydrolase 7 (cellulase C) family.

The catalysed reaction is Hydrolysis of (1-&gt;4)-beta-D-glucosidic linkages in cellulose and cellotetraose, releasing cellobiose from the non-reducing ends of the chains.. Functionally, the biological conversion of cellulose to glucose generally requires three types of hydrolytic enzymes: (1) Endoglucanases which cut internal beta-1,4-glucosidic bonds; (2) Exocellobiohydrolases that cut the disaccharide cellobiose from the non-reducing end of the cellulose polymer chain; (3) Beta-1,4-glucosidases which hydrolyze the cellobiose and other short cello-oligosaccharides to glucose. The chain is Exoglucanase 1 (CBH-1) from Cryphonectria parasitica (Chestnut blight fungus).